The sequence spans 545 residues: ATP synthase subunit alpha (545 aa).

172-179 (GDRKTGKT) is a binding site for ATP.

Belongs to the ATPase alpha/beta chains family. F-type ATPases have 2 components, CF(1) - the catalytic core - and CF(0) - the membrane proton channel. CF(1) has five subunits: alpha(3), beta(3), gamma(1), delta(1), epsilon(1). CF(0) has three main subunits: a(1), b(2) and c(9-12). The alpha and beta chains form an alternating ring which encloses part of the gamma chain. CF(1) is attached to CF(0) by a central stalk formed by the gamma and epsilon chains, while a peripheral stalk is formed by the delta and b chains.

The protein localises to the cell membrane. The enzyme catalyses ATP + H2O + 4 H(+)(in) = ADP + phosphate + 5 H(+)(out). In terms of biological role, produces ATP from ADP in the presence of a proton gradient across the membrane. The alpha chain is a regulatory subunit. The protein is ATP synthase subunit alpha of Corynebacterium urealyticum (strain ATCC 43042 / DSM 7109).